Here is an 84-residue protein sequence, read N- to C-terminus: Trefoil factor 1 (84 aa).

Residues 1-24 (MATMENKVICALVLVSMLALGTLA) form the signal peptide. The P-type domain occupies 29-72 (ETCTVAPRERQNCGFPGVTPSQCANKGCCFDDTVRGVPWCFYPN). 3 disulfides stabilise this stretch: cysteine 31-cysteine 57, cysteine 41-cysteine 56, and cysteine 51-cysteine 68.

As to quaternary structure, heterodimer with GKN2; disulfide linked. As to expression, found in stomach, with highest levels in the upper gastric mucosal cells (at protein level). Detected in goblet cells of the small and large intestine and rectum, small submucosal glands in the esophagus, mucous acini of the sublingual gland, submucosal glands of the trachea, and epithelial cells lining the exocrine pancreatic ducts but not in the remainder of the pancreas (at protein level). Scattered expression is detected in the epithelial cells of the gallbladder and submucosal glands of the vagina, and weak expression is observed in the bronchial goblet cells of the pseudostratified epithelia in the respiratory system (at protein level). Detected in urine (at protein level). Strongly expressed in breast cancer but at low levels in normal mammary tissue. It is regulated by estrogen in MCF-7 cells. Strong expression found in normal gastric mucosa and in the regenerative tissues surrounding ulcerous lesions of gastrointestinal tract, but lower expression found in gastric cancer (at protein level).

It is found in the secreted. In terms of biological role, stabilizer of the mucous gel overlying the gastrointestinal mucosa that provides a physical barrier against various noxious agents. May inhibit the growth of calcium oxalate crystals in urine. The polypeptide is Trefoil factor 1 (TFF1) (Homo sapiens (Human)).